The chain runs to 80 residues: Clavanin-C (80 aa).

Positions 1 to 19 are cleaved as a signal peptide; the sequence is MKTTILILLILGLGINAKS. The propeptide occupies 20–29; it reads LEERKSEEEK. At phenylalanine 52 the chain carries Phenylalanine amide. Positions 54–80 are excised as a propeptide; sequence DDQQDNGKFYGHYAEDNGKHWYDTGDQ.

Hemocytes and pharyngeal tissues.

Its subcellular location is the secreted. In terms of biological role, has antimicrobial activity against E.coli, L.monocytogenes and C.albicans. The chain is Clavanin-C from Styela clava (Sea squirt).